The chain runs to 354 residues: Thiamine thiazole synthase 1, chloroplastic (354 aa).

A chloroplast-targeting transit peptide spans 1 to 45 (MATAAASSLLKSSFAGSRLPAATRTTPASLVVATGPRGAGAGPIC). Residues Ala-100, 120-121 (EQ), Gly-128, and Val-193 contribute to the substrate site. Cys-222 carries the 2,3-didehydroalanine (Cys) modification. Substrate-binding positions include Asp-224, His-239, Met-291, and 301–303 (RMG).

This sequence belongs to the THI4 family. As to quaternary structure, homooctamer. It depends on Fe cation as a cofactor. Post-translationally, during the catalytic reaction, a sulfide is transferred from Cys-222 to a reaction intermediate, generating a dehydroalanine residue. As to expression, highest expression in developing embryos and green leaves and a very low level expression seen in endosperm, roots, etiolated shoots and immature ears.

The protein localises to the plastid. Its subcellular location is the chloroplast. It carries out the reaction [ADP-thiazole synthase]-L-cysteine + glycine + NAD(+) = [ADP-thiazole synthase]-dehydroalanine + ADP-5-ethyl-4-methylthiazole-2-carboxylate + nicotinamide + 3 H2O + 2 H(+). Functionally, involved in biosynthesis of the thiamine precursor thiazole. Catalyzes the conversion of NAD and glycine to adenosine diphosphate 5-(2-hydroxyethyl)-4-methylthiazole-2-carboxylic acid (ADT), an adenylated thiazole intermediate. The reaction includes an iron-dependent sulfide transfer from a conserved cysteine residue of the protein to a thiazole intermediate. The enzyme can only undergo a single turnover, which suggests it is a suicide enzyme. May have additional roles in adaptation to various stress conditions and in DNA damage tolerance. The chain is Thiamine thiazole synthase 1, chloroplastic from Zea mays (Maize).